The following is a 334-amino-acid chain: Thioredoxin reductase (334 aa).

Residues 10–13, 39–40, Gln44, Asn53, Val86, Cys143, Asp287, and 294–296 each bind FAD; these read SGPA, IA, and RQA. A disulfide bond links Cys140 and Cys143.

Belongs to the class-II pyridine nucleotide-disulfide oxidoreductase family. Homodimer. It depends on FAD as a cofactor.

It is found in the cytoplasm. The catalysed reaction is [thioredoxin]-dithiol + NADP(+) = [thioredoxin]-disulfide + NADPH + H(+). The protein is Thioredoxin reductase (cys-9) of Neurospora crassa (strain ATCC 24698 / 74-OR23-1A / CBS 708.71 / DSM 1257 / FGSC 987).